The primary structure comprises 440 residues: MAKTGMYVGLDIGTTSVKVVVAEYIEGQMNIIGVGNAKSDGLNRGIVVDIDQTVQAIQRAVRQAEEKAGIQIKSVNVGLPANLLEVESCQGMIAVSSESKEITDEDVRNVASAALVRSTPPERQIVAILPQDFTVDGFEGIKDPRGMLGVRMEMFGVVYTGPKTIIHNIRKCVEKAGLGINELVITPLALTETILTDGEKDFGTIVIDMGGGQTTTSVIHDKQLKFTHVNQEGGEFITKDISIVLNTSFNNAEALKINYGDAYPERTSANEEFPVDVIGKSEPVRVDERYLSEIIEARVEQILRKSKEVLDEIDAFELPGGVVLTGGAASMPGIVDLAQEIFEANVKLYVPNHMGLRNPVFANVISIVEYSAQLNDIYHIAKYAIPGEKSKPAQSVAVQQEVRYDTYAEQPQEEYEEFNERESGEKVTGKIKDFFSNIFD.

It belongs to the FtsA/MreB family. In terms of assembly, self-interacts. Interacts with FtsZ.

The protein resides in the cell membrane. Functionally, cell division protein that is involved in the assembly of the Z ring. May serve as a membrane anchor for the Z ring. This is Cell division protein FtsA from Enterococcus faecalis (strain ATCC 700802 / V583).